The sequence spans 461 residues: Fumarate hydratase class II (461 aa).

Substrate-binding positions include 99-101 (SGT), 130-133 (HPND), 140-142 (STN), and Thr188. Residue His189 is the Proton donor/acceptor of the active site. The active site involves Ser319. Substrate contacts are provided by residues Ser320 and 325-327 (KVN).

The protein belongs to the class-II fumarase/aspartase family. Fumarase subfamily. As to quaternary structure, homotetramer.

Its subcellular location is the cytoplasm. It carries out the reaction (S)-malate = fumarate + H2O. The protein operates within carbohydrate metabolism; tricarboxylic acid cycle; (S)-malate from fumarate: step 1/1. In terms of biological role, involved in the TCA cycle. Catalyzes the stereospecific interconversion of fumarate to L-malate. In Prochlorococcus marinus subsp. pastoris (strain CCMP1986 / NIES-2087 / MED4), this protein is Fumarate hydratase class II.